Reading from the N-terminus, the 458-residue chain is RuvB-like helicase 1 (458 aa).

Residue 71–78 (GGPGTGKT) coordinates ATP.

Belongs to the RuvB family. As to quaternary structure, may form heterododecamers with RVB2. Component of the SWR1 chromatin remodeling complex, the INO80 chromatin remodeling complex, and of the R2TP complex.

The protein localises to the nucleus. It catalyses the reaction ATP + H2O = ADP + phosphate + H(+). Functionally, DNA helicase which participates in several chromatin remodeling complexes, including the SWR1 and the INO80 complexes. The SWR1 complex mediates the ATP-dependent exchange of histone H2A for the H2A variant HZT1 leading to transcriptional regulation of selected genes by chromatin remodeling. The INO80 complex remodels chromatin by shifting nucleosomes and is involved in DNA repair. Also involved in pre-rRNA processing. This is RuvB-like helicase 1 (RVB1) from Gibberella zeae (strain ATCC MYA-4620 / CBS 123657 / FGSC 9075 / NRRL 31084 / PH-1) (Wheat head blight fungus).